We begin with the raw amino-acid sequence, 288 residues long: uncharacterized protein (288 aa).

A run of 4 helical transmembrane segments spans residues 43-63, 190-210, 243-263, and 265-285; these read LFTLSFIPSIIYCIFILNYII, LFIFFGTPVIILFWFVTFLLE, GIPIILQPVIIILIPELSILI, and LLQMFTTFLVFVAILQINKSL.

Its subcellular location is the cell membrane. This is an uncharacterized protein from Rickettsia prowazekii (strain Madrid E).